The sequence spans 150 residues: Ribonuclease H (150 aa).

One can recognise an RNase H type-1 domain in the interval 7–148 (ESNIVEIWTD…ADQLATKARM (142 aa)). Mg(2+) contacts are provided by aspartate 16, glutamate 54, aspartate 76, and aspartate 140.

This sequence belongs to the RNase H family. Monomer. Mg(2+) is required as a cofactor.

It is found in the cytoplasm. It catalyses the reaction Endonucleolytic cleavage to 5'-phosphomonoester.. Functionally, endonuclease that specifically degrades the RNA of RNA-DNA hybrids. In Granulibacter bethesdensis (strain ATCC BAA-1260 / CGDNIH1), this protein is Ribonuclease H.